Consider the following 286-residue polypeptide: Serine carboxypeptidase-like (286 aa).

Ser4 is an active-site residue. Intrachain disulfides connect Cys83–Cys98 and Cys121–Cys126. Residue Asp193 is part of the active site. Cys196 is a binding site for substrate. Asn227 carries N-linked (GlcNAc...) asparagine glycosylation. The active site involves His250.

The protein belongs to the peptidase S10 family.

Functionally, involved in degradation of small peptides. The polypeptide is Serine carboxypeptidase-like (Pisum sativum (Garden pea)).